The primary structure comprises 472 residues: Adenosylhomocysteinase (472 aa).

Thr-64, Asp-138, and Glu-198 together coordinate substrate. NAD(+) is bound at residue 199–201; sequence TTT. Substrate contacts are provided by Lys-228 and Asp-232. NAD(+)-binding positions include Asn-233, 262–267, Glu-285, Asn-320, 341–343, and Asn-386; these read GFGDVG and IGH.

Belongs to the adenosylhomocysteinase family. It depends on NAD(+) as a cofactor.

It localises to the cytoplasm. It carries out the reaction S-adenosyl-L-homocysteine + H2O = L-homocysteine + adenosine. It participates in amino-acid biosynthesis; L-homocysteine biosynthesis; L-homocysteine from S-adenosyl-L-homocysteine: step 1/1. In terms of biological role, may play a key role in the regulation of the intracellular concentration of adenosylhomocysteine. The protein is Adenosylhomocysteinase of Prochlorococcus marinus (strain MIT 9215).